The chain runs to 440 residues: Chitinase-like protein Idgf5 (440 aa).

Positions methionine 1–alanine 27 are cleaved as a signal peptide. The 412-residue stretch at alanine 28–phenylalanine 439 folds into the GH18 domain. A disulfide bridge links cysteine 32 with cysteine 56. Asparagine 126, asparagine 283, and asparagine 403 each carry an N-linked (GlcNAc...) asparagine glycan. Residues cysteine 340 and cysteine 421 are joined by a disulfide bond.

It belongs to the glycosyl hydrolase 18 family. IDGF subfamily. Post-translationally, glycosylated.

It localises to the secreted. In terms of biological role, cooperates with insulin-like peptides to stimulate the proliferation, polarization and motility of imaginal disk cells. May act by stabilizing the binding of insulin-like peptides to its receptor through a simultaneous interaction with both molecules to form a multiprotein signaling complex. In Glossina morsitans morsitans (Savannah tsetse fly), this protein is Chitinase-like protein Idgf5 (Idgf5).